Here is a 530-residue protein sequence, read N- to C-terminus: Alkali-sensitive linkage protein 1 (530 aa).

The first 18 residues, 1-18 (MRTTFATVALAFLSTVGA), serve as a signal peptide directing secretion. N55 is a glycosylation site (N-linked (GlcNAc...) asparagine). The interval 69–90 (SVTESSDDGASTALPTTSTESV) is disordered. 2 N-linked (GlcNAc...) asparagine glycosylation sites follow: N120 and N128.

It localises to the endoplasmic reticulum. The protein localises to the golgi apparatus. The protein resides in the secreted. Its subcellular location is the cell wall. This is Alkali-sensitive linkage protein 1 (asl1) from Schizosaccharomyces pombe (strain 972 / ATCC 24843) (Fission yeast).